Here is an 81-residue protein sequence, read N- to C-terminus: Bacteriochlorophyll c-binding protein (81 aa).

Position 25 (H25) interacts with a bacteriochlorophyll c.

It belongs to the BChl C/E-binding protein family.

It localises to the chlorosome. It is found in the chlorosome envelope. Functionally, component of the photosynthetic apparatus. The light harvesting B740 complex binds bacteriochlorophyll c. The polypeptide is Bacteriochlorophyll c-binding protein (csmA) (Prosthecochloris aestuarii (strain DSM 271 / SK 413)).